The following is a 459-amino-acid chain: Exodeoxyribonuclease 7 large subunit (459 aa).

It belongs to the XseA family. Heterooligomer composed of large and small subunits.

The protein resides in the cytoplasm. The catalysed reaction is Exonucleolytic cleavage in either 5'- to 3'- or 3'- to 5'-direction to yield nucleoside 5'-phosphates.. Functionally, bidirectionally degrades single-stranded DNA into large acid-insoluble oligonucleotides, which are then degraded further into small acid-soluble oligonucleotides. In Pseudomonas aeruginosa (strain UCBPP-PA14), this protein is Exodeoxyribonuclease 7 large subunit.